The following is a 358-amino-acid chain: Peptide chain release factor 1 (358 aa).

The residue at position 235 (Gln235) is an N5-methylglutamine.

The protein belongs to the prokaryotic/mitochondrial release factor family. Post-translationally, methylated by PrmC. Methylation increases the termination efficiency of RF1.

The protein resides in the cytoplasm. In terms of biological role, peptide chain release factor 1 directs the termination of translation in response to the peptide chain termination codons UAG and UAA. This chain is Peptide chain release factor 1, found in Neisseria gonorrhoeae (strain ATCC 700825 / FA 1090).